A 181-amino-acid chain; its full sequence is Thioredoxin M-type, chloroplastic (181 aa).

Residues 1–67 (MAIENCLQLS…RQFRYSSVVC (67 aa)) constitute a chloroplast transit peptide. The Thioredoxin domain maps to 68-180 (KASEAVKEVQ…LTDSIEKYLS (113 aa)). Catalysis depends on nucleophile residues cysteine 104 and cysteine 107. A disulfide bridge connects residues cysteine 104 and cysteine 107.

This sequence belongs to the thioredoxin family. Plant M-type subfamily. As to quaternary structure, forms a complex with heterodimeric ferredoxin-thioredoxin reductase (FTR) and ferredoxin.

The protein resides in the plastid. It localises to the chloroplast. In terms of biological role, participates in various redox reactions through the reversible oxidation of the active center dithiol to a disulfide. The M form is known to activate NADP-malate dehydrogenase. This Spinacia oleracea (Spinach) protein is Thioredoxin M-type, chloroplastic.